Here is a 550-residue protein sequence, read N- to C-terminus: CCR4-NOT transcription complex subunit 6-like-B (550 aa).

Positions 1–148 are required for interaction with cnot1, cnot3 and cnot7; it reads MPKEKYDPPD…LYQEPDGMRK (148 aa). 4 LRR repeats span residues 52 to 73, 75 to 96, 98 to 120, and 121 to 143; these read HLTV…IAKL, NLVY…LGNV, SLRE…GRLF, and RLQT…YQEP. The tract at residues 153–550 is nuclease domain; that stretch reads MLDNLSVHPE…INGVHLPSRR (398 aa). Residue E235 coordinates Mg(2+). Positions 235, 271, 355, and 360 each coordinate substrate. D405 contacts Mg(2+). D405 acts as the Proton donor/acceptor in catalysis. Positions 407, 474, and 479 each coordinate substrate.

It belongs to the CCR4/nocturin family. Component of the CCR4-NOT complex. Mg(2+) serves as cofactor.

The protein resides in the cytoplasm. Its subcellular location is the nucleus. The catalysed reaction is Exonucleolytic cleavage of poly(A) to 5'-AMP.. Functionally, poly(A) nuclease with 3'-5' RNase activity. Catalytic component of the CCR4-NOT complex which is one of the major cellular mRNA deadenylases and is linked to various cellular processes including bulk mRNA degradation, miRNA-mediated repression, translational repression during translational initiation and general transcription regulation. Additional complex functions may be a consequence of its influence on mRNA expression. The chain is CCR4-NOT transcription complex subunit 6-like-B (cnot6l-b) from Xenopus laevis (African clawed frog).